The sequence spans 81 residues: Toxin MIT1 (81 aa).

Intrachain disulfides connect Cys-7/Cys-19, Cys-13/Cys-31, Cys-18/Cys-59, Cys-41/Cys-67, and Cys-61/Cys-77.

The protein belongs to the AVIT (prokineticin) family. Expressed by the venom gland.

The protein localises to the secreted. In terms of biological role, potent agonist for both PKR1/PROKR1 and PKR2/PROKR2. Potently contracts gastrointestinal (GI) smooth muscle. The sequence is that of Toxin MIT1 from Dendroaspis polylepis polylepis (Black mamba).